The chain runs to 59 residues: Large ribosomal subunit protein uL30 (59 aa).

This sequence belongs to the universal ribosomal protein uL30 family. In terms of assembly, part of the 50S ribosomal subunit.

This Psychrobacter arcticus (strain DSM 17307 / VKM B-2377 / 273-4) protein is Large ribosomal subunit protein uL30.